The chain runs to 416 residues: Tumor necrosis factor receptor superfamily member 16 (416 aa).

The first 19 residues, 1–19 (MAGFVPLLLLLLPAGPTWG), serve as a signal peptide directing secretion. TNFR-Cys repeat units lie at residues 23–57 (KCLT…TVCE), 58–99 (PCLD…DAVC), 100–138 (RCAY…DTVC), and 140–180 (ECPE…DAEC). Intrachain disulfides connect Cys-24–Cys-35, Cys-36–Cys-49, Cys-39–Cys-56, Cys-59–Cys-75, Cys-78–Cys-91, Cys-81–Cys-99, Cys-101–Cys-114, Cys-117–Cys-130, Cys-120–Cys-138, Cys-141–Cys-156, Cys-159–Cys-172, and Cys-162–Cys-180. Residues 29 to 239 (YTTSGECCKA…PVVSRGTADN (211 aa)) are Extracellular-facing. A glycan (N-linked (GlcNAc...) asparagine) is linked at Asn-52. Residues 240-261 (LIPVYCSILAAVVVGLVAYIAF) form a helical membrane-spanning segment. Residues 262–416 (KRWNSCKQNK…YSESTATSPV (155 aa)) lie on the Cytoplasmic side of the membrane. Polar residues-rich tracts occupy residues 270-284 (NKQG…QTPS) and 294-315 (SGIS…STQG). The tract at residues 270 to 328 (NKQGANNRPVNQTPSPEGEKLHSDSGISVDSQSLHDQQPPNQSTQGPAPKGDGSLYASL) is disordered. One can recognise a Death domain in the interval 333–410 (QEEVEKLLSS…DIAESLYSES (78 aa)).

As to quaternary structure, homodimer; disulfide-linked. Heterodimer with SORCS2. The extracellular domains of the heterodimer bind NGF. N- and O-glycosylated. Post-translationally, phosphorylated on serine residues. Detected in embryonic dorsal root ganglion and retina.

It is found in the cell membrane. The protein localises to the perikaryon. It localises to the cell projection. The protein resides in the growth cone. Its subcellular location is the dendritic spine. Its function is as follows. Low affinity receptor which can bind to NGF, BDNF, NTF3, and NTF4. Forms a heterodimeric receptor with SORCS2 that binds the precursor forms of NGF, BDNF and NTF3 with high affinity, and has much lower affinity for mature NGF and BDNF. Plays an important role in differentiation and survival of specific neuronal populations during development. Can mediate cell survival as well as cell death of neural cells. Plays a role in the inactivation of RHOA. Necessary for the circadian oscillation of clock genes in the suprachiasmatic nucleus (SCmgetaN) of the brain and in liver and of the genes involved in glucose and lipid metabolism in the liver. In Gallus gallus (Chicken), this protein is Tumor necrosis factor receptor superfamily member 16 (NGFR).